The chain runs to 108 residues: PTS system fructose-like EIIB component 1 (108 aa).

One can recognise a PTS EIIB type-2 domain in the interval 1 to 104; sequence MSKKLIALCA…IIKEIEEMIA (104 aa). The Phosphocysteine intermediate role is filled by cysteine 11. Cysteine 11 bears the Phosphocysteine; by EIIA mark.

Its subcellular location is the cytoplasm. It carries out the reaction D-fructose(out) + N(pros)-phospho-L-histidyl-[protein] = D-fructose 1-phosphate(in) + L-histidyl-[protein]. Functionally, the phosphoenolpyruvate-dependent sugar phosphotransferase system (sugar PTS), a major carbohydrate active transport system, catalyzes the phosphorylation of incoming sugar substrates concomitantly with their translocation across the cell membrane. The enzyme II FryABC PTS system is involved in fructose transport. The polypeptide is PTS system fructose-like EIIB component 1 (fryB) (Escherichia coli O157:H7).